The primary structure comprises 2177 residues: Protein sidekick-2 (2177 aa).

Residues 1-26 (MKGLGVPAAALLWGGLSALLPPSLPA) form the signal peptide. Topologically, residues 27–1937 (DDVSPYFKTE…ANPFYEEWWF (1911 aa)) are extracellular. 6 Ig-like C2-type domains span residues 31–113 (PYFK…TEVQ), 118–205 (GSFE…QPIT), 220–299 (PTII…SSVP), 313–401 (PQFV…TYLA), 407–496 (PNIT…ADLV), and 501–590 (TRIT…AHLR). A disulfide bridge links C53 with C96. 2 N-linked (GlcNAc...) asparagine glycosylation sites follow: N198 and N228. 2 disulfide bridges follow: C242–C289 and C335–C385. N-linked (GlcNAc...) asparagine glycosylation occurs at N408. 2 disulfide bridges follow: C428–C480 and C522–C574. N-linked (GlcNAc...) asparagine glycans are attached at residues N582, N614, N709, N748, N809, N941, and N953. 13 consecutive Fibronectin type-III domains span residues 597–693 (APES…LPEE), 698–794 (PPQN…TLQG), 799–898 (PPGN…THED), 902–996 (PVGH…VPPE), 1000–1099 (APTN…TLQA), 1104–1202 (APAN…TRES), 1207–1304 (GPSN…TLDD), 1305–1402 (VPGP…TEKR), 1407–1504 (PPSK…TLQA), 1509–1626 (APTI…VGEA), 1631–1727 (APQN…TQQA), 1731–1826 (APGS…TGPG), and 1829–1928 (APGP…AQKA). N1107, N1210, N1261, N1346, N1462, N1580, N1593, N1675, N1694, N1746, and N1820 each carry an N-linked (GlcNAc...) asparagine glycan. The chain crosses the membrane as a helical span at residues 1938 to 1958 (LVVIALVGLIFILLLVFVLII). Over 1959–2177 (RGQSKKYAKK…APIGGFSSFV (219 aa)) the chain is Cytoplasmic. 2 disordered regions span residues 2044 to 2071 (AESS…VDPA) and 2103 to 2177 (QAYS…SSFV). Composition is skewed to polar residues over residues 2045–2063 (ESSS…QGSD) and 2119–2130 (PLSNSTSTQQGS). Positions 2142 to 2151 (PQTPGNPPSQ) are enriched in pro residues. Residues 2171–2177 (GGFSSFV) carry the PDZ-binding motif.

Belongs to the sidekick family. Homodimer; mediates homophilic interactions to promote cell adhesion. As to expression, expressed by non-overlapping subsets of retinal neurons. SDK1, SDK2, DSCAM and DSCAML1 are expressed in non-overlapping subsets of interneurons and retinal ganglion cells (RGCs) that form synapses in distinct inner plexiform layer (IPL) sublaminae.

It is found in the cell membrane. The protein localises to the synapse. Functionally, adhesion molecule that promotes lamina-specific synaptic connections in the retina. Expressed in specific subsets of interneurons and retinal ganglion cells (RGCs) and promotes synaptic connectivity via homophilic interactions. This is Protein sidekick-2 from Gallus gallus (Chicken).